Consider the following 293-residue polypeptide: MPELPEVETVRRGLQPAMEGATIVRAETRRKDLRFPFQTDFVARLEGQAVTGLGRRAKYLLADLASGDVLLMHLGMSGSFRVIDAAGVTVPGDFHRPRGEDRVHDHVRFTMSSRAEIVFNDPRRFGYMKIVARSALGDEPLLKGLGPEPLGNEFDAAVLAHGCRNRKTSLKAALLDQRVVAGLGNIYVCEALFRARLSPRRLAATLAMKTGAPSERAERLVGAIRDVLNQAIEAGGSSLRDHRQTTGELGYFQHSFQVYDREGDKCRTPACKGAVKRFTQNGRSTFWCPVCQT.

Proline 2 serves as the catalytic Schiff-base intermediate with DNA. Glutamate 3 functions as the Proton donor in the catalytic mechanism. Lysine 58 functions as the Proton donor; for beta-elimination activity in the catalytic mechanism. The DNA site is built by histidine 104, arginine 123, and arginine 166. The FPG-type zinc finger occupies 257 to 293 (QVYDREGDKCRTPACKGAVKRFTQNGRSTFWCPVCQT). Arginine 283 functions as the Proton donor; for delta-elimination activity in the catalytic mechanism.

Belongs to the FPG family. As to quaternary structure, monomer. Zn(2+) is required as a cofactor.

It catalyses the reaction Hydrolysis of DNA containing ring-opened 7-methylguanine residues, releasing 2,6-diamino-4-hydroxy-5-(N-methyl)formamidopyrimidine.. It carries out the reaction 2'-deoxyribonucleotide-(2'-deoxyribose 5'-phosphate)-2'-deoxyribonucleotide-DNA = a 3'-end 2'-deoxyribonucleotide-(2,3-dehydro-2,3-deoxyribose 5'-phosphate)-DNA + a 5'-end 5'-phospho-2'-deoxyribonucleoside-DNA + H(+). Involved in base excision repair of DNA damaged by oxidation or by mutagenic agents. Acts as a DNA glycosylase that recognizes and removes damaged bases. Has a preference for oxidized purines, such as 7,8-dihydro-8-oxoguanine (8-oxoG). Has AP (apurinic/apyrimidinic) lyase activity and introduces nicks in the DNA strand. Cleaves the DNA backbone by beta-delta elimination to generate a single-strand break at the site of the removed base with both 3'- and 5'-phosphates. This Nitrobacter winogradskyi (strain ATCC 25391 / DSM 10237 / CIP 104748 / NCIMB 11846 / Nb-255) protein is Formamidopyrimidine-DNA glycosylase.